Reading from the N-terminus, the 380-residue chain is Alcohol dehydrogenase 2 (380 aa).

Zn(2+) contacts are provided by C48, T50, H70, C100, C103, C106, C114, and C178. Residues T50 and H70 each contribute to the an alcohol site. T50 lines the NAD(+) pocket. NAD(+) is bound by residues 203–208 (GLGAVG), D227, R232, T273, V296, 296–298 (VGV), F323, and R373.

This sequence belongs to the zinc-containing alcohol dehydrogenase family. As to quaternary structure, homodimer. Homotetramer. Requires Zn(2+) as cofactor.

The protein resides in the cytoplasm. The enzyme catalyses a primary alcohol + NAD(+) = an aldehyde + NADH + H(+). It catalyses the reaction a secondary alcohol + NAD(+) = a ketone + NADH + H(+). This is Alcohol dehydrogenase 2 (ADH2) from Solanum lycopersicum (Tomato).